The following is a 72-amino-acid chain: Protein SlyX homolog (72 aa).

The protein belongs to the SlyX family.

The sequence is that of Protein SlyX homolog from Vibrio cholerae serotype O1 (strain ATCC 39541 / Classical Ogawa 395 / O395).